The sequence spans 547 residues: Delta-guaiene synthase 3 (547 aa).

3 residues coordinate Mg(2+): D299, D303, and D444. The DDXXD motif motif lies at 299 to 303 (DDTYD).

It belongs to the terpene synthase family. Mg(2+) is required as a cofactor.

The enzyme catalyses (2E,6E)-farnesyl diphosphate = delta-guaiene + diphosphate. The catalysed reaction is (2E,6E)-farnesyl diphosphate = alpha-guaiene + diphosphate. It participates in secondary metabolite biosynthesis; terpenoid biosynthesis. Functionally, sesquiterpene synthase involved in the biosynthesis of delta-guaiene (78.2%) and alpha-guaiene (20.9%), two structures composed of five- and seven-membered rings. Also produces 0.9% of alpha-humulene. This Aquilaria crassna (Eagle wood) protein is Delta-guaiene synthase 3 (C4).